Consider the following 305-residue polypeptide: Uridylate-specific endoribonuclease D (305 aa).

The first 17 residues, M1–G17, serve as a signal peptide directing secretion. In terms of domain architecture, EndoU spans S33 to I305. Active-site residues include H182, H197, and K240. An N-linked (GlcNAc...) asparagine glycan is attached at N288.

It belongs to the ENDOU family. Monomer. It depends on Mn(2+) as a cofactor.

The protein resides in the secreted. It carries out the reaction ribonucleotidyl-uridine-RNA = a 5'-end dephospho-uridine-RNA + a 3'-end 2',3'-cyclophospho-ribonucleotide-RNA. Functionally, endoribonuclease that cleaves single-stranded RNAs at 5' of uridylates and releases a product with a 2',3'-cyclic phosphate at the 3'-end. The sequence is that of Uridylate-specific endoribonuclease D (endou-d) from Xenopus laevis (African clawed frog).